Consider the following 203-residue polypeptide: Thymidylate kinase (203 aa).

14–21 (GGEGSGKS) contributes to the ATP binding site.

Belongs to the thymidylate kinase family.

The catalysed reaction is dTMP + ATP = dTDP + ADP. Its function is as follows. Phosphorylation of dTMP to form dTDP in both de novo and salvage pathways of dTTP synthesis. The protein is Thymidylate kinase of Rickettsia canadensis (strain McKiel).